A 130-amino-acid polypeptide reads, in one-letter code: Inner membrane protein YqjF (130 aa).

The Cytoplasmic segment spans residues 1–5 (MKKLE). Residues 6–26 (DVGVLVARILMPILFITAGWG) form a helical membrane-spanning segment. Topologically, residues 27–45 (KITGYAGTQQYMEAMGVPG) are periplasmic. The helical transmembrane segment at 46–66 (FMLPLVILLEFGGGLAILFGF) threads the bilayer. Topologically, residues 67–70 (LTRT) are cytoplasmic. The helical transmembrane segment at 71–91 (TALFTAGFTLLTAFLFHSNFA) threads the bilayer. The Periplasmic portion of the chain corresponds to 92–101 (EGVNSLMFMK). A helical transmembrane segment spans residues 102-122 (NLTISGGFLLLAITGPGAYSI). The Cytoplasmic portion of the chain corresponds to 123–130 (DRLLNKKW).

The protein belongs to the DoxX family.

The protein localises to the cell inner membrane. This is Inner membrane protein YqjF (yqjF) from Escherichia coli (strain K12).